The following is a 239-amino-acid chain: Purine nucleoside phosphorylase DeoD-type (239 aa).

Residue histidine 5 participates in a purine D-ribonucleoside binding. Phosphate-binding positions include glycine 21, arginine 25, arginine 44, and 88-91 (RVGS). Residues 180 to 182 (EME) and 204 to 205 (SD) each bind a purine D-ribonucleoside. The active-site Proton donor is the aspartate 205.

It belongs to the PNP/UDP phosphorylase family. Homohexamer; trimer of homodimers.

It catalyses the reaction a purine D-ribonucleoside + phosphate = a purine nucleobase + alpha-D-ribose 1-phosphate. The enzyme catalyses a purine 2'-deoxy-D-ribonucleoside + phosphate = a purine nucleobase + 2-deoxy-alpha-D-ribose 1-phosphate. Catalyzes the reversible phosphorolytic breakdown of the N-glycosidic bond in the beta-(deoxy)ribonucleoside molecules, with the formation of the corresponding free purine bases and pentose-1-phosphate. The sequence is that of Purine nucleoside phosphorylase DeoD-type from Yersinia pestis bv. Antiqua (strain Antiqua).